The chain runs to 1948 residues: Receptor-type tyrosine-protein phosphatase S (1948 aa).

A signal peptide spans 1–29 (MAPTWGPGMVSVVGPMGLLVVLLVGGCAA). Over 30–1282 (EEPPRFIKEP…PQPIVDGEEG (1253 aa)) the chain is Extracellular. Ig-like C2-type domains are found at residues 33–123 (PRFI…AKLT), 135–233 (PNID…ANLY), and 245–327 (PRFS…AQIT). Intrachain disulfides connect Cys-54–Cys-107 and Cys-156–Cys-216. The interval 68–72 (KKGKK) is important for binding to glycosaminoglycan chains. Residues Asn-263 and Asn-308 are each glycosylated (N-linked (GlcNAc...) asparagine). Cys-266 and Cys-311 form a disulfide bridge. Fibronectin type-III domains follow at residues 334 to 424 (APGT…TGEQ), 429 to 523 (APRN…TQQG), 527 to 616 (QPMN…TLQS), 621 to 718 (PPQD…TDED), 723 to 831 (PPRK…TKGA), 832 to 930 (VLGR…TPRG), 931 to 1033 (HPQI…FLRD), and 1036 to 1120 (SPKN…TAFN). Residues 700–724 (TEVGPGPESSPVVVRTDEDVPSAPP) form a disordered region. A compositionally biased stretch (low complexity) spans 701-713 (EVGPGPESSPVVV). Residue Asn-733 is glycosylated (N-linked (GlcNAc...) asparagine). Asn-940 is a glycosylation site (N-linked (GlcNAc...) asparagine). The chain crosses the membrane as a helical span at residues 1283–1303 (LIWVIGPVLAVVFIICIVIAI). Over 1304–1948 (LLYKNKPDSK…YLGSFDHYAT (645 aa)) the chain is Cytoplasmic. Composition is skewed to basic and acidic residues over residues 1311–1321 (DSKRKDSEPRT) and 1331–1340 (APHHPKDPVE). The segment at 1311–1340 (DSKRKDSEPRTKCLLNNADLAPHHPKDPVE) is disordered. Tyrosine-protein phosphatase domains follow at residues 1393–1648 (LSQE…LLEA) and 1680–1939 (MELE…ALEY). Substrate-binding positions include Asp-1557, 1589–1595 (CSAGVGR), and Gln-1633. Cys-1589 (phosphocysteine intermediate) is an active-site residue. The Phosphocysteine intermediate role is filled by Cys-1880.

Belongs to the protein-tyrosine phosphatase family. Receptor class 2A subfamily. In terms of assembly, binding to large heparan sulfate proteoglycan structures promotes oligomerization. Binding to chondroitin sulfate proteoglycan does not lead to oligomerization. Interacts (via Ig-like domains) with NTRK3. Interacts (via Ig-like domains) with NTRK1, but does not form detectable complexes with NTRK2. Interacts with PPFIA1, PPFIA2 and PPFIA3. In terms of processing, a cleavage occurs, separating the extracellular domain from the transmembrane segment. This process called 'ectodomain shedding' is thought to be involved in receptor desensitization, signal transduction and/or membrane localization. Detected in peripheral blood plasmacytoid dendritic cells (at protein level). Detected in all tissues tested except for placenta and liver. Detected in peripheral blood plasmacytoid dendritic cells.

Its subcellular location is the cell membrane. The protein resides in the cell projection. The protein localises to the axon. It localises to the perikaryon. It is found in the cytoplasmic vesicle. Its subcellular location is the secretory vesicle. The protein resides in the synaptic vesicle membrane. The protein localises to the synapse. It localises to the synaptosome. It is found in the postsynaptic density. Its subcellular location is the neuron projection. The protein resides in the growth cone. It catalyses the reaction O-phospho-L-tyrosyl-[protein] + H2O = L-tyrosyl-[protein] + phosphate. Its function is as follows. Cell surface receptor that binds to glycosaminoglycans, including chondroitin sulfate proteoglycans and heparan sulfate proteoglycan. Binding to chondroitin sulfate and heparan sulfate proteoglycans has opposite effects on PTPRS oligomerization and regulation of neurite outgrowth. Contributes to the inhibition of neurite and axonal outgrowth by chondroitin sulfate proteoglycans, also after nerve transection. Plays a role in stimulating neurite outgrowth in response to the heparan sulfate proteoglycan GPC2. Required for normal brain development, especially for normal development of the pituitary gland and the olfactory bulb. Functions as a tyrosine phosphatase. Mediates dephosphorylation of NTRK1, NTRK2 and NTRK3. Plays a role in down-regulation of signaling cascades that lead to the activation of Akt and MAP kinases. Down-regulates TLR9-mediated activation of NF-kappa-B, as well as production of TNF, interferon alpha and interferon beta. This is Receptor-type tyrosine-protein phosphatase S (PTPRS) from Homo sapiens (Human).